The sequence spans 365 residues: tRNA N6-adenosine threonylcarbamoyltransferase (365 aa).

Residues histidine 119 and histidine 123 each coordinate Fe cation. Substrate is bound by residues 141-145 (LVSGG), aspartate 174, glycine 187, and asparagine 289. A Fe cation-binding site is contributed by aspartate 317. The segment at 341–365 (SARPRWPLDKTSPALIGSGKKGAKA) is disordered.

The protein belongs to the KAE1 / TsaD family. It depends on Fe(2+) as a cofactor.

The protein localises to the cytoplasm. It carries out the reaction L-threonylcarbamoyladenylate + adenosine(37) in tRNA = N(6)-L-threonylcarbamoyladenosine(37) in tRNA + AMP + H(+). Its function is as follows. Required for the formation of a threonylcarbamoyl group on adenosine at position 37 (t(6)A37) in tRNAs that read codons beginning with adenine. Is involved in the transfer of the threonylcarbamoyl moiety of threonylcarbamoyl-AMP (TC-AMP) to the N6 group of A37, together with TsaE and TsaB. TsaD likely plays a direct catalytic role in this reaction. This chain is tRNA N6-adenosine threonylcarbamoyltransferase, found in Ruegeria sp. (strain TM1040) (Silicibacter sp.).